We begin with the raw amino-acid sequence, 449 residues long: MELETHLSKYFTLAFTHKSMSLEMREKLAINSSTTLKEFLQTIKTHCPNIKECMVLSTCNRFEIYASLKHGANTNEQKNALLKILAQNKKMSVSDLEKCVLMNTDESAVHHVFSVCSSLDSLVVGETQITGQMKNAYKFAFEEKFCSKDLTRLLHFAFKCAAKVRNLTGISKQGVSISSVAVKEALNIFEKERIKDKKALVIGLGEMAQLVIKHLLNKQFEVLILGRNAAKFEDFVKELEEPKKVSFQNIENLNAYINEYELLFCATSSPHFIVQNRMLKETIFRRFWFDLAVPRNIEKPVLDNIFLYSVDDLEPMVRENVENRQESRTKAYEIVGLATMEFYQWIQSLEVEPVIKDLRELARISAQKELQKALKKRYVPKEYESNIEKILHNAFNTFLHHPTIALKKNAQKEESDVLVGAIKNLFNLDKSTTCHAQNLNLYKCEYYEE.

Residues 58–61 (TCNR), Ser-121, 126–128 (ETQ), and Gln-132 contribute to the substrate site. Cys-59 serves as the catalytic Nucleophile. 203–208 (GLGEMA) is a binding site for NADP(+).

The protein belongs to the glutamyl-tRNA reductase family. As to quaternary structure, homodimer.

The enzyme catalyses (S)-4-amino-5-oxopentanoate + tRNA(Glu) + NADP(+) = L-glutamyl-tRNA(Glu) + NADPH + H(+). It participates in porphyrin-containing compound metabolism; protoporphyrin-IX biosynthesis; 5-aminolevulinate from L-glutamyl-tRNA(Glu): step 1/2. In terms of biological role, catalyzes the NADPH-dependent reduction of glutamyl-tRNA(Glu) to glutamate 1-semialdehyde (GSA). The protein is Glutamyl-tRNA reductase of Helicobacter pylori (strain P12).